A 318-amino-acid chain; its full sequence is Beta-ketoacyl-[acyl-carrier-protein] synthase III (318 aa).

Catalysis depends on residues C112 and H245. The segment at 246–250 is ACP-binding; the sequence is QANIR. Residue N275 is part of the active site.

It belongs to the thiolase-like superfamily. FabH family. In terms of assembly, homodimer.

It localises to the cytoplasm. It catalyses the reaction malonyl-[ACP] + acetyl-CoA + H(+) = 3-oxobutanoyl-[ACP] + CO2 + CoA. It functions in the pathway lipid metabolism; fatty acid biosynthesis. Its function is as follows. Catalyzes the condensation reaction of fatty acid synthesis by the addition to an acyl acceptor of two carbons from malonyl-ACP. Catalyzes the first condensation reaction which initiates fatty acid synthesis and may therefore play a role in governing the total rate of fatty acid production. Possesses both acetoacetyl-ACP synthase and acetyl transacylase activities. Its substrate specificity determines the biosynthesis of branched-chain and/or straight-chain of fatty acids. This chain is Beta-ketoacyl-[acyl-carrier-protein] synthase III, found in Nitrosomonas europaea (strain ATCC 19718 / CIP 103999 / KCTC 2705 / NBRC 14298).